The following is a 471-amino-acid chain: Glutamate--tRNA ligase (471 aa).

A 'HIGH' region motif is present at residues 9-19 (PSPTGYLHVGG). Zn(2+) contacts are provided by Cys-98, Cys-100, Cys-125, and Asp-127. The 'KMSKS' region motif lies at 237 to 241 (KLSKR). Lys-240 provides a ligand contact to ATP.

The protein belongs to the class-I aminoacyl-tRNA synthetase family. Glutamate--tRNA ligase type 1 subfamily. As to quaternary structure, monomer. Requires Zn(2+) as cofactor.

The protein resides in the cytoplasm. The catalysed reaction is tRNA(Glu) + L-glutamate + ATP = L-glutamyl-tRNA(Glu) + AMP + diphosphate. In terms of biological role, catalyzes the attachment of glutamate to tRNA(Glu) in a two-step reaction: glutamate is first activated by ATP to form Glu-AMP and then transferred to the acceptor end of tRNA(Glu). The sequence is that of Glutamate--tRNA ligase from Yersinia pseudotuberculosis serotype IB (strain PB1/+).